Here is a 151-residue protein sequence, read N- to C-terminus: Ribosome maturation factor RimP (151 aa).

The protein belongs to the RimP family.

It localises to the cytoplasm. In terms of biological role, required for maturation of 30S ribosomal subunits. The protein is Ribosome maturation factor RimP of Caldicellulosiruptor saccharolyticus (strain ATCC 43494 / DSM 8903 / Tp8T 6331).